The primary structure comprises 339 residues: Fructose-1,6-bisphosphatase class 1 (339 aa).

Mg(2+)-binding residues include glutamate 101, aspartate 120, leucine 122, and aspartate 123. Substrate-binding positions include 123–126 (DGSS), asparagine 215, and lysine 281. Glutamate 287 serves as a coordination point for Mg(2+).

This sequence belongs to the FBPase class 1 family. In terms of assembly, homotetramer. Requires Mg(2+) as cofactor.

The protein resides in the cytoplasm. The enzyme catalyses beta-D-fructose 1,6-bisphosphate + H2O = beta-D-fructose 6-phosphate + phosphate. It participates in carbohydrate biosynthesis; gluconeogenesis. This is Fructose-1,6-bisphosphatase class 1 from Polynucleobacter necessarius subsp. necessarius (strain STIR1).